Reading from the N-terminus, the 275-residue chain is Large ribosomal subunit protein uL2 (275 aa).

Disordered stretches follow at residues 35-55 (EKQT…RHKG) and 223-260 (VAMN…KTRN). The segment covering 39–49 (RSSGRNNQGRV) has biased composition (polar residues).

The protein belongs to the universal ribosomal protein uL2 family. As to quaternary structure, part of the 50S ribosomal subunit. Forms a bridge to the 30S subunit in the 70S ribosome.

Functionally, one of the primary rRNA binding proteins. Required for association of the 30S and 50S subunits to form the 70S ribosome, for tRNA binding and peptide bond formation. It has been suggested to have peptidyltransferase activity; this is somewhat controversial. Makes several contacts with the 16S rRNA in the 70S ribosome. In Methylococcus capsulatus (strain ATCC 33009 / NCIMB 11132 / Bath), this protein is Large ribosomal subunit protein uL2.